The sequence spans 873 residues: Cilia- and flagella-associated protein 58 (873 aa).

Coiled coils occupy residues 106–609 and 642–832; these read VDSA…VISE and ETQY…QKRK. Positions 202-221 are disordered; that stretch reads QEIQHRQNEASRESRKKEKL. The span at 204–221 shows a compositional bias: basic and acidic residues; the sequence is IQHRQNEASRESRKKEKL.

Belongs to the CFAP58 family. As to quaternary structure, interacts with ODFP2. Predominantly expressed in the testis. Also found at lower levels in ciliated cells and tissues such as neural progenitor cells and oviducts.

It localises to the cell projection. The protein resides in the cilium. The protein localises to the flagellum. It is found in the cytoplasm. Its subcellular location is the cytoskeleton. It localises to the microtubule organizing center. The protein resides in the centrosome. In terms of biological role, has an essential role in the assembly and organization of the sperm flagellar axoneme. Required for the elongation of the primary cilium and sperm flagellar midpiece via modulation of the Notch signaling pathway. The protein is Cilia- and flagella-associated protein 58 of Mus musculus (Mouse).